Consider the following 285-residue polypeptide: DNA repair protein RecO (285 aa).

Belongs to the RecO family.

In terms of biological role, involved in DNA repair and RecF pathway recombination. The sequence is that of DNA repair protein RecO from Synechococcus sp. (strain JA-2-3B'a(2-13)) (Cyanobacteria bacterium Yellowstone B-Prime).